The chain runs to 406 residues: Tyrosine--tRNA ligase (406 aa).

Tyr-35 contacts L-tyrosine. The 'HIGH' region motif lies at 40–49; sequence ATSASLHIGH. Residues Tyr-167 and Gln-171 each coordinate L-tyrosine. A 'KMSKS' region motif is present at residues 227–231; the sequence is KMGKS. ATP is bound at residue Lys-230. One can recognise an S4 RNA-binding domain in the interval 341 to 405; it reads ILLVDLMVLA…IGKKKILRIV (65 aa).

Belongs to the class-I aminoacyl-tRNA synthetase family. TyrS type 1 subfamily. Homodimer.

It is found in the cytoplasm. It catalyses the reaction tRNA(Tyr) + L-tyrosine + ATP = L-tyrosyl-tRNA(Tyr) + AMP + diphosphate + H(+). In terms of biological role, catalyzes the attachment of tyrosine to tRNA(Tyr) in a two-step reaction: tyrosine is first activated by ATP to form Tyr-AMP and then transferred to the acceptor end of tRNA(Tyr). The polypeptide is Tyrosine--tRNA ligase (Borrelia recurrentis (strain A1)).